The sequence spans 93 residues: ATP synthase subunit c (93 aa).

Transmembrane regions (helical) follow at residues 13–33 (AIGV…GMGI) and 58–78 (ISLA…FILL).

It belongs to the ATPase C chain family. In terms of assembly, F-type ATPases have 2 components, F(1) - the catalytic core - and F(0) - the membrane proton channel. F(1) has five subunits: alpha(3), beta(3), gamma(1), delta(1), epsilon(1). F(0) has three main subunits: a(1), b(2) and c(10-14). The alpha and beta chains form an alternating ring which encloses part of the gamma chain. F(1) is attached to F(0) by a central stalk formed by the gamma and epsilon chains, while a peripheral stalk is formed by the delta and b chains.

Its subcellular location is the cell inner membrane. Its function is as follows. F(1)F(0) ATP synthase produces ATP from ADP in the presence of a proton or sodium gradient. F-type ATPases consist of two structural domains, F(1) containing the extramembraneous catalytic core and F(0) containing the membrane proton channel, linked together by a central stalk and a peripheral stalk. During catalysis, ATP synthesis in the catalytic domain of F(1) is coupled via a rotary mechanism of the central stalk subunits to proton translocation. Key component of the F(0) channel; it plays a direct role in translocation across the membrane. A homomeric c-ring of between 10-14 subunits forms the central stalk rotor element with the F(1) delta and epsilon subunits. This Campylobacter hominis (strain ATCC BAA-381 / DSM 21671 / CCUG 45161 / LMG 19568 / NCTC 13146 / CH001A) protein is ATP synthase subunit c.